The sequence spans 191 residues: dCTP deaminase, dUMP-forming (191 aa).

DCTP is bound by residues 101–106 (KSSLGR), Asp-119, 127–129 (TLE), Gln-148, Tyr-162, and Gln-174. Catalysis depends on Glu-129, which acts as the Proton donor/acceptor.

It belongs to the dCTP deaminase family. Homotrimer.

It catalyses the reaction dCTP + 2 H2O = dUMP + NH4(+) + diphosphate. The protein operates within pyrimidine metabolism; dUMP biosynthesis; dUMP from dCTP: step 1/1. In terms of biological role, bifunctional enzyme that catalyzes both the deamination of dCTP to dUTP and the hydrolysis of dUTP to dUMP without releasing the toxic dUTP intermediate. The polypeptide is dCTP deaminase, dUMP-forming (Streptomyces avermitilis (strain ATCC 31267 / DSM 46492 / JCM 5070 / NBRC 14893 / NCIMB 12804 / NRRL 8165 / MA-4680)).